Reading from the N-terminus, the 353-residue chain is Polyprenal reductase 2 (353 aa).

The next 6 helical transmembrane spans lie at 11-31 (PLLC…ALPI), 78-98 (FMHF…AIWF), 175-195 (MHIV…LSLA), 234-254 (PLLK…WGSL), 291-308 (YLAE…SGAE), and 313-335 (WFLF…NWYL).

The protein belongs to the steroid 5-alpha reductase family. Polyprenal reductase subfamily.

The protein resides in the cell membrane. The catalysed reaction is a di-trans,poly-cis-dolichal + NADP(+) = a di-trans,poly-cis-polyprenal + NADPH + H(+). The protein operates within protein modification; protein glycosylation. In terms of biological role, plays a key role in early steps of protein N-linked glycosylation by being involved in the conversion of polyprenol into dolichol. Acts as a polyprenal reductase that mediates the reduction of polyprenal into dolichal in a NADP-dependent mechanism. Dolichols are required for the synthesis of dolichol-linked monosaccharides and the oligosaccharide precursor used for N-glycosylation. In Oryza sativa subsp. japonica (Rice), this protein is Polyprenal reductase 2.